We begin with the raw amino-acid sequence, 420 residues long: Nucleobindin-2 (420 aa).

Residues 1–24 (MRWRTIQARYCFLLVPCVLTALEA) form the signal peptide. The DNA-binding element occupies 171–223 (RTRHEEFKKYEMMKEHERREYLKTLSEEKRKEEEAKFAEMKRKHEDHPKVNHP). A disordered region spans residues 194 to 225 (TLSEEKRKEEEAKFAEMKRKHEDHPKVNHPGS). The interval 213–420 (KHEDHPKVNH…AGELKFEPHT (208 aa)) is binds to necdin. EF-hand domains lie at 241-276 (PNDF…ELDK) and 293-328 (ERLR…KEFL). D254, N256, D258, E265, D306, N308, D310, and E317 together coordinate Ca(2+). A GBA motif is present at residues 304–334 (EIDNNKDRLVTLEEFLRATEKKEFLEPDSWE). S332 carries the post-translational modification Phosphoserine. Residues 366 to 386 (DELQKQKEELQRQHDHLEAQK) show a composition bias toward basic and acidic residues. The disordered stretch occupies residues 366–420 (DELQKQKEELQRQHDHLEAQKQEYQQAVQQLEQKKFQQGIAPSGPAGELKFEPHT). The span at 387 to 396 (QEYQQAVQQL) shows a compositional bias: low complexity.

It belongs to the nucleobindin family. In terms of assembly, interacts (via GBA motif) with guanine nucleotide-binding protein G(i) alpha subunit GNAI3. Preferentially interacts with inactive rather than active GNAI3. Interaction with GNAI3 is inhibited when NUCB2 binds calcium, probably due to a conformational change which renders the GBA motif inaccessible. Binds to the postmitotic growth suppressor NDN; coexpression abolishes NUCB2 secretion. Interacts with MC4R.

Its subcellular location is the golgi apparatus. It is found in the endoplasmic reticulum. The protein localises to the nucleus envelope. The protein resides in the membrane. It localises to the cytoplasm. Its subcellular location is the secreted. Calcium-binding protein which may have a role in calcium homeostasis. Acts as a non-receptor guanine nucleotide exchange factor which binds to and activates guanine nucleotide-binding protein (G-protein) alpha subunit GNAI3. In terms of biological role, anorexigenic peptide, seems to play an important role in hypothalamic pathways regulating food intake and energy homeostasis, acting in a leptin-independent manner. May also exert hypertensive roles and modulate blood pressure through directly acting on peripheral arterial resistance. In intestinal epithelial cells, plays a role in the inhibition of hepatic glucose production via MC4R receptor leading to increased cyclic adenosine monophosphate (cAMP) levels and glucagon-like peptide 1 (GLP-1) secretion. The polypeptide is Nucleobindin-2 (Nucb2) (Rattus norvegicus (Rat)).